The sequence spans 414 residues: Transforming growth factor beta-2 proprotein (414 aa).

A signal peptide spans 1-20 (MHYCVLSTFLLLHLVPVALS). N-linked (GlcNAc...) asparagine glycans are attached at residues Asn72, Asn140, and Asn241. 4 disulfides stabilise this stretch: Cys309–Cys318, Cys317–Cys380, Cys346–Cys411, and Cys350–Cys413.

The protein belongs to the TGF-beta family. Interacts with the serine proteases, HTRA1 and HTRA3. Interacts with ASPN. Interacts with MFAP5. As to quaternary structure, interacts with Transforming growth factor beta-2 (TGF-beta-2) chain; interaction is non-covalent and maintains (TGF-beta-2) in a latent state. Interacts with LRRC32/GARP; leading to regulate activation of TGF-beta-2. Interacts with NREP; the interaction results in a decrease in TGFB2 autoinduction. In terms of assembly, transforming growth factor beta-2: Homodimer; disulfide-linked. Transforming growth factor beta-2: Interacts with TGF-beta receptors (TGFBR1 and TGFBR2), leading to signal transduction. In terms of processing, the precursor proprotein is cleaved in the Golgi apparatus to form Transforming growth factor beta-2 (TGF-beta-2) and Latency-associated peptide (LAP) chains, which remain non-covalently linked, rendering TGF-beta-2 inactive.

The protein localises to the secreted. Its subcellular location is the extracellular space. It localises to the extracellular matrix. Its function is as follows. Precursor of the Latency-associated peptide (LAP) and Transforming growth factor beta-2 (TGF-beta-2) chains, which constitute the regulatory and active subunit of TGF-beta-2, respectively. In terms of biological role, required to maintain the Transforming growth factor beta-2 (TGF-beta-2) chain in a latent state during storage in extracellular matrix. Associates non-covalently with TGF-beta-2 and regulates its activation via interaction with 'milieu molecules', such as LTBP1 and LRRC32/GARP, that control activation of TGF-beta-2. Multifunctional protein that regulates various processes such as angiogenesis and heart development. Activation into mature form follows different steps: following cleavage of the proprotein in the Golgi apparatus, Latency-associated peptide (LAP) and Transforming growth factor beta-2 (TGF-beta-2) chains remain non-covalently linked rendering TGF-beta-2 inactive during storage in extracellular matrix. At the same time, LAP chain interacts with 'milieu molecules', such as LTBP1 and LRRC32/GARP, that control activation of TGF-beta-2 and maintain it in a latent state during storage in extracellular milieus. Once activated following release of LAP, TGF-beta-2 acts by binding to TGF-beta receptors (TGFBR1 and TGFBR2), which transduce signal. The polypeptide is Transforming growth factor beta-2 proprotein (Tgfb2) (Mus musculus (Mouse)).